The sequence spans 60 residues: Large ribosomal subunit protein uL30 (60 aa).

The protein belongs to the universal ribosomal protein uL30 family. Part of the 50S ribosomal subunit.

In Lysinibacillus sphaericus (strain C3-41), this protein is Large ribosomal subunit protein uL30.